The sequence spans 265 residues: MQIRQSVKFKKPLIHYITNPISINDCANMILAVGAKPIMAEHPLEVSEITSISESLGINLGNITDNKMKSMLISGKTSYEKKIPQVIDLVGVGCSKLRLDYAKKFISECHPNVIKGNMSEIKAIYGIKSSAKGIDVGECDIITEQNFDENIEMIKRLSMETDSVVAATGVVDIISNGTYTYIISNGCEMLSMITGTGSMLTGIIASYISSGNILEGTALAIAIMGICGELSQNVKGTGSFRNELIDNMFSISDDIIIKKIRINSY.

Met-39 lines the substrate pocket. Residues Lys-115 and Thr-168 each contribute to the ATP site. Gly-195 provides a ligand contact to substrate.

The protein belongs to the Thz kinase family. Mg(2+) is required as a cofactor.

The catalysed reaction is 5-(2-hydroxyethyl)-4-methylthiazole + ATP = 4-methyl-5-(2-phosphooxyethyl)-thiazole + ADP + H(+). The protein operates within cofactor biosynthesis; thiamine diphosphate biosynthesis; 4-methyl-5-(2-phosphoethyl)-thiazole from 5-(2-hydroxyethyl)-4-methylthiazole: step 1/1. In terms of biological role, catalyzes the phosphorylation of the hydroxyl group of 4-methyl-5-beta-hydroxyethylthiazole (THZ). This is Hydroxyethylthiazole kinase 1 from Clostridium botulinum (strain Loch Maree / Type A3).